Reading from the N-terminus, the 159-residue chain is MNITIISVGKLKEKYLKHAIDEYSKRLSRYCKLNILELQDEQTPDNASEKDELIIKDKEGNKILNSIKDNMYVITLDLKGKMMSSEELSKFIDNCGVRGNSNLCFVIGGSLGLSEAVLKRSNHSLCFSKMTFPHQLFRVMLLEQIYRAFRISNGEPYHK.

S-adenosyl-L-methionine-binding positions include leucine 76, glycine 108, and 127–132 (FSKMTF).

The protein belongs to the RNA methyltransferase RlmH family. Homodimer.

The protein localises to the cytoplasm. The catalysed reaction is pseudouridine(1915) in 23S rRNA + S-adenosyl-L-methionine = N(3)-methylpseudouridine(1915) in 23S rRNA + S-adenosyl-L-homocysteine + H(+). In terms of biological role, specifically methylates the pseudouridine at position 1915 (m3Psi1915) in 23S rRNA. The protein is Ribosomal RNA large subunit methyltransferase H of Clostridium botulinum (strain Eklund 17B / Type B).